The chain runs to 149 residues: UPF0178 protein CPF_2548 (149 aa).

This sequence belongs to the UPF0178 family.

The chain is UPF0178 protein CPF_2548 from Clostridium perfringens (strain ATCC 13124 / DSM 756 / JCM 1290 / NCIMB 6125 / NCTC 8237 / Type A).